Reading from the N-terminus, the 255-residue chain is ATP synthase subunit a (255 aa).

Residues 1–6 constitute a propeptide, removed in mature form; sequence MNFIIN. A run of 5 helical transmembrane segments spans residues 32–52, 91–111, 121–141, 159–200, and 219–251; these read LTSFSIYSIAVVALILGFSIL, LFPFMFSLFMYILIANVVSLV, LIWTIGLSVAIWIGCTLTGLA, PLVP…LAGL, and LSILLGIVALESAIAFIQAIVFTILTCSYIKDA.

In terms of assembly, F-type ATP synthases have 2 components, the catalytic core F(1) and the membrane-embedded component F(0), linked together by a central stalk and a peripheral stalk. The central stalk, also called rotor shaft, is often seen as part of F(1). The peripheral stalk is seen as part of F(0). F(0) contains the membrane channel next to the rotor. F-type ATP synthases form dimers but each monomer functions independently in ATP generation. The dimer consists of 17 different polypeptides: ATP1 (subunit alpha, 3 molecules per monomer, part of F(1)), ATP2 (subunit beta, 3 copies per monomer, part of F(1)), ATP3 (subunit gamma, part of the central stalk), ATP4 (subunit b, part of the peripheral stalk), ATP5/OSCP (subunit 5/OSCP, part of the peripheral stalk), ATP6 (subunit a, part of the peripheral stalk), ATP7 (subunit d, part of the peripheral stalk), ATP8 (subunit 8, part of the peripheral stalk), OLI1 (subunit c, part of the rotor, 10 molecules per monomer), ATP14 (subunit h, part of the peripheral stalk), ATP15 (subunit epsilon, part of the central stalk), ATP16 (subunit delta, part of the central stalk), ATP17 (subunit f, part of the peripheral stalk), ATP18 (subunit i/j, part of the peripheral stalk), ATP19 (subunit k, dimer-specific, at interface between monomers), ATP20 (subunit g, at interface between monomers), TIM11 (subunit e, at interface between monomers).

Its subcellular location is the mitochondrion inner membrane. Its function is as follows. Mitochondrial membrane ATP synthase (F(1)F(0) ATP synthase or Complex V) produces ATP from ADP in the presence of a proton gradient across the membrane which is generated by electron transport complexes of the respiratory chain. F-type ATP synthases consist of two structural domains, F(1) - containing the extramembraneous catalytic core, and F(0) - containing the membrane proton channel, linked together by a central stalk and a peripheral stalk. During catalysis, ATP synthesis in the catalytic domain of F(1) is coupled via a rotary mechanism of the central stalk subunits to proton translocation. Key component of the proton channel; it may play a direct role in the translocation of protons across the membrane. The protein is ATP synthase subunit a of Yarrowia lipolytica (strain CLIB 122 / E 150) (Yeast).